The following is a 79-amino-acid chain: Small ribosomal subunit protein bS20 (79 aa).

The protein belongs to the bacterial ribosomal protein bS20 family.

Binds directly to 16S ribosomal RNA. This Karelsulcia muelleri (strain GWSS) (Sulcia muelleri) protein is Small ribosomal subunit protein bS20.